We begin with the raw amino-acid sequence, 363 residues long: NAD(P)H-quinone oxidoreductase subunit 1, chloroplastic (363 aa).

Transmembrane regions (helical) follow at residues 30–50 (LVPI…IVWL), 98–118 (FSIG…VIPF), 127–147 (LSIG…GLLM), 248–268 (YSGI…LVSS), 300–320 (VFGT…FLFI), and 336–356 (LLNL…LLTT).

Belongs to the complex I subunit 1 family. NDH is composed of at least 16 different subunits, 5 of which are encoded in the nucleus.

Its subcellular location is the plastid. It localises to the chloroplast thylakoid membrane. It catalyses the reaction a plastoquinone + NADH + (n+1) H(+)(in) = a plastoquinol + NAD(+) + n H(+)(out). The catalysed reaction is a plastoquinone + NADPH + (n+1) H(+)(in) = a plastoquinol + NADP(+) + n H(+)(out). In terms of biological role, NDH shuttles electrons from NAD(P)H:plastoquinone, via FMN and iron-sulfur (Fe-S) centers, to quinones in the photosynthetic chain and possibly in a chloroplast respiratory chain. The immediate electron acceptor for the enzyme in this species is believed to be plastoquinone. Couples the redox reaction to proton translocation, and thus conserves the redox energy in a proton gradient. This is NAD(P)H-quinone oxidoreductase subunit 1, chloroplastic from Drimys granadensis.